Here is a 243-residue protein sequence, read N- to C-terminus: Chromosome partition protein MukE (243 aa).

Residues 214-243 (DSLALEKQADLNEVDDNDELEDELDDEEHA) form a disordered region. Positions 225 to 243 (NEVDDNDELEDELDDEEHA) are enriched in acidic residues.

It belongs to the MukE family. As to quaternary structure, interacts, and probably forms a ternary complex, with MukF and MukB. The complex formation is stimulated by calcium or magnesium.

The protein resides in the cytoplasm. The protein localises to the nucleoid. In terms of biological role, involved in chromosome condensation, segregation and cell cycle progression. May participate in facilitating chromosome segregation by condensation DNA from both sides of a centrally located replisome during cell division. Probably acts via its interaction with MukB and MukF. In Pasteurella multocida (strain Pm70), this protein is Chromosome partition protein MukE.